The following is a 242-amino-acid chain: ATP synthase subunit a (242 aa).

Transmembrane regions (helical) follow at residues 29–49 (SSIY…LAFY), 84–104 (FIPL…LGMT), 114–134 (IIVT…VGFV), 140–160 (FLTL…MIVI), 181–201 (MAGH…MIYL), and 203–223 (FLPI…AILQ).

Belongs to the ATPase A chain family. In terms of assembly, F-type ATPases have 2 components, CF(1) - the catalytic core - and CF(0) - the membrane proton channel. CF(1) has five subunits: alpha(3), beta(3), gamma(1), delta(1), epsilon(1). CF(0) has three main subunits: a(1), b(2) and c(9-12). The alpha and beta chains form an alternating ring which encloses part of the gamma chain. CF(1) is attached to CF(0) by a central stalk formed by the gamma and epsilon chains, while a peripheral stalk is formed by the delta and b chains.

It is found in the cell inner membrane. Its function is as follows. Key component of the proton channel; it plays a direct role in the translocation of protons across the membrane. This chain is ATP synthase subunit a, found in Rickettsia akari (strain Hartford).